Consider the following 263-residue polypeptide: Pyridoxine 5'-phosphate synthase (263 aa).

3-amino-2-oxopropyl phosphate is bound at residue Asn15. 17 to 18 (DH) is a binding site for 1-deoxy-D-xylulose 5-phosphate. Arg26 is a 3-amino-2-oxopropyl phosphate binding site. Residue His51 is the Proton acceptor of the active site. 1-deoxy-D-xylulose 5-phosphate is bound by residues Arg53 and His58. Glu78 functions as the Proton acceptor in the catalytic mechanism. Thr108 contacts 1-deoxy-D-xylulose 5-phosphate. His199 acts as the Proton donor in catalysis. 3-amino-2-oxopropyl phosphate contacts are provided by residues Gly200 and 221–222 (GH).

Belongs to the PNP synthase family. As to quaternary structure, homooctamer; tetramer of dimers.

Its subcellular location is the cytoplasm. The catalysed reaction is 3-amino-2-oxopropyl phosphate + 1-deoxy-D-xylulose 5-phosphate = pyridoxine 5'-phosphate + phosphate + 2 H2O + H(+). It participates in cofactor biosynthesis; pyridoxine 5'-phosphate biosynthesis; pyridoxine 5'-phosphate from D-erythrose 4-phosphate: step 5/5. Catalyzes the complicated ring closure reaction between the two acyclic compounds 1-deoxy-D-xylulose-5-phosphate (DXP) and 3-amino-2-oxopropyl phosphate (1-amino-acetone-3-phosphate or AAP) to form pyridoxine 5'-phosphate (PNP) and inorganic phosphate. The protein is Pyridoxine 5'-phosphate synthase of Ralstonia nicotianae (strain ATCC BAA-1114 / GMI1000) (Ralstonia solanacearum).